Reading from the N-terminus, the 391-residue chain is Phosphoprotein (391 aa).

Thr10 and Thr16 each carry phosphothreonine. Over residues 54-65 (QKNIQHPTASHQ) the composition is skewed to polar residues. Disordered regions lie at residues 54–98 (QKNI…EPLF) and 145–186 (TSTP…RSGS). Ser69 is modified (phosphoserine). 3 positions are modified to phosphothreonine: Thr91, Thr150, and Thr165. Residue Ser188 is modified to Phosphoserine. Residues 218 to 245 (ANEIMDLLRGMDARLQHLEQKVDKVLAQ) are a coiled coil. Thr250 is modified (phosphothreonine). Ser257 bears the Phosphoserine mark. Thr258 and Thr282 each carry phosphothreonine. Residues Ser292 and Ser294 each carry the phosphoserine modification. Thr298 carries the post-translational modification Phosphothreonine. Phosphoserine occurs at positions 301 and 374. The interval 343-391 (AGRKVMITKMITDCVANPQMKQAFEQRLAKASTEDALNDIKRDIIRNAI) is interaction with the nucleoprotein. Thr375 is subject to Phosphothreonine.

It belongs to the rubulavirus/avulavirus P protein family. Homotetramer. Interacts (via multimerization domain) with polymerase L; this interaction forms the polymerase L-P complex. Interacts (via N-terminus) with N0 (via Ncore); this interaction allows P to chaperon N0 to avoid N polymerization before encapsidation. Interacts (via C-terminus) with N-RNA template; this interaction positions the polymerase on the template for both transcription and replication. Interacts with host RPS6KB1 kinase; this interaction may play a role in the viral replication and transcription.

Its subcellular location is the virion. Essential cofactor of the RNA polymerase L that plays a central role in the transcription and replication by forming the polymerase complex with RNA polymerase L and recruiting L to the genomic N-RNA template for RNA synthesis. Also plays a central role in the encapsidation of nascent RNA chains by forming the encapsidation complex with the nucleocapsid protein N (N-P complex). Acts as a chaperone for newly synthesized free N protein, so-called N0, allowing encapsidation of nascent RNA chains during replication. The nucleoprotein protein N prevents excessive phosphorylation of P, which leads to down-regulation of viral transcription/ replication. Participates, together with N, in the formation of viral factories (viroplasms), which are large inclusions in the host cytoplasm where replication takes place. The sequence is that of Phosphoprotein from Mumps virus genotype N (strain L-Zagreb vaccine) (MuV).